The primary structure comprises 381 residues: GDSL esterase/lipase At3g48460 (381 aa).

Residues 1–26 (MSSSISPLLTTAISVAILLFSTISTA) form the signal peptide. The Nucleophile role is filled by serine 45. Asparagine 112, asparagine 140, and asparagine 258 each carry an N-linked (GlcNAc...) asparagine glycan. Catalysis depends on residues aspartate 344 and histidine 347.

This sequence belongs to the 'GDSL' lipolytic enzyme family.

It localises to the secreted. The chain is GDSL esterase/lipase At3g48460 from Arabidopsis thaliana (Mouse-ear cress).